The following is a 313-amino-acid chain: Porphobilinogen deaminase (313 aa).

Cys242 carries the S-(dipyrrolylmethanemethyl)cysteine modification.

The protein belongs to the HMBS family. As to quaternary structure, monomer. Dipyrromethane is required as a cofactor.

The enzyme catalyses 4 porphobilinogen + H2O = hydroxymethylbilane + 4 NH4(+). It participates in porphyrin-containing compound metabolism; protoporphyrin-IX biosynthesis; coproporphyrinogen-III from 5-aminolevulinate: step 2/4. Tetrapolymerization of the monopyrrole PBG into the hydroxymethylbilane pre-uroporphyrinogen in several discrete steps. In Yersinia enterocolitica serotype O:8 / biotype 1B (strain NCTC 13174 / 8081), this protein is Porphobilinogen deaminase.